Reading from the N-terminus, the 146-residue chain is Large ribosomal subunit protein uL15 (146 aa).

Over residues 1–13 (MKLHELKAAEGSR) the composition is skewed to basic and acidic residues. Residues 1 to 56 (MKLHELKAAEGSRRVRNRVGRGAATGNGKTSGRGQKGQKARSGGKLRPGFEGGQLP) are disordered. Over residues 23-35 (AATGNGKTSGRGQ) the composition is skewed to gly residues.

It belongs to the universal ribosomal protein uL15 family. As to quaternary structure, part of the 50S ribosomal subunit.

In terms of biological role, binds to the 23S rRNA. In Staphylococcus epidermidis (strain ATCC 35984 / DSM 28319 / BCRC 17069 / CCUG 31568 / BM 3577 / RP62A), this protein is Large ribosomal subunit protein uL15.